Reading from the N-terminus, the 605-residue chain is Probable potassium transport system protein Kup 3 (605 aa).

Transmembrane regions (helical) follow at residues 16–36 (ALGLVFGDIGTSPIYTLTVIF), 49–69 (ILSLIFWTMTILVSAEYAWLA), 97–117 (VAFAGFLSFVGVSLLLGDAVI), 138–158 (GLSTGALVAIAAAIAIGLFSV), 170–190 (FGPIMALWFGTLAVTGAVSAF), 212–232 (GLAGYFVLSEVILCATGGEAL), 247–267 (AWHFVFVALYLNYLGQGVFAI), 287–307 (LYIPFLILTIMATIIASQAII), 339–359 (IYLGAVNWSLMVAVIFIMLVF), 368–388 (AYGMAVTGSMTITGIMMIIVF), 397–417 (ALVALVVTLIAAAYHVSTFSK), and 418–438 (LPHGAYWSIILASIPFVTIII).

It belongs to the HAK/KUP transporter (TC 2.A.72) family.

The protein resides in the cell inner membrane. The enzyme catalyses K(+)(in) + H(+)(in) = K(+)(out) + H(+)(out). Transport of potassium into the cell. Likely operates as a K(+):H(+) symporter. The chain is Probable potassium transport system protein Kup 3 from Geobacter sulfurreducens (strain ATCC 51573 / DSM 12127 / PCA).